Consider the following 136-residue polypeptide: UPF0102 protein BBta_0181 (136 aa).

Belongs to the UPF0102 family.

The chain is UPF0102 protein BBta_0181 from Bradyrhizobium sp. (strain BTAi1 / ATCC BAA-1182).